We begin with the raw amino-acid sequence, 235 residues long: Small ribosomal subunit protein uS3 (235 aa).

Residues 39-107 form the KH type-2 domain; the sequence is VRQFLNKELA…PAQINIAEVK (69 aa). Residues 215 to 226 show a composition bias toward low complexity; sequence AQQPEQQPATPK. The disordered stretch occupies residues 215–235; the sequence is AQQPEQQPATPKKAPRGKGRK.

Belongs to the universal ribosomal protein uS3 family. Part of the 30S ribosomal subunit. Forms a tight complex with proteins S10 and S14.

Functionally, binds the lower part of the 30S subunit head. Binds mRNA in the 70S ribosome, positioning it for translation. The sequence is that of Small ribosomal subunit protein uS3 from Histophilus somni (strain 129Pt) (Haemophilus somnus).